The sequence spans 409 residues: UPF0261 protein Spro_4740 (409 aa).

This sequence belongs to the UPF0261 family.

The sequence is that of UPF0261 protein Spro_4740 from Serratia proteamaculans (strain 568).